Consider the following 708-residue polypeptide: Alpha-galactosidase (708 aa).

Aspartate 441 acts as the Nucleophile in catalysis. The active-site Proton donor is aspartate 505.

This sequence belongs to the glycosyl hydrolase 36 family. Homotetramer.

It carries out the reaction Hydrolysis of terminal, non-reducing alpha-D-galactose residues in alpha-D-galactosides, including galactose oligosaccharides, galactomannans and galactolipids.. The protein is Alpha-galactosidase (rafA) of Escherichia coli.